The sequence spans 133 residues: uncharacterized protein (133 aa).

Residues K82–Q133 are disordered. Positions Y86–K100 are enriched in polar residues. The segment covering Q105–Q133 has biased composition (low complexity).

This is an uncharacterized protein from Acidianus convivator (ABV).